The chain runs to 923 residues: Dynein axonemal intermediate chain 3 (923 aa).

A disordered region spans residues 1-35 (MAPKPPKSPKGQKKGKKNMKQQLLVPEEEEPMNME). The segment covering 10–19 (KGQKKGKKNM) has biased composition (basic residues). WD repeat units follow at residues 398 to 438 (ESPD…DRIE), 480 to 536 (GHRK…PAVT), 702 to 741 (VHDG…GPLL), and 745 to 785 (CGPK…HEPA). The stretch at 869–889 (LELVKKKAKIYQKTKEQMEAE) forms a coiled coil.

Interacts with ACTR2; this interaction reduces binding of the Arp2/3 complex to the VCA domain of nucleation promoting factors. Part of the multisubunit axonemal dynein complex formed at least of two heavy chains and a number of intermediate and light chains. Found in a associated with the catalytic heavy chain DNAH2, the intermediate chain DNAI4, and the light chain DYNLT1. Strongly expressed in the testes. Detected also in brain and lung tissues.

The protein resides in the cytoplasm. In terms of biological role, acts as a negative regulator of cell migration, invasion, and metastasis downstream of p53/TP53, through inhibition of Arp2/3 complex-mediated actin polymerization. Via its association with the multisubunit axonemal dynein complex, is potentially involved in the regulation of cilia function. May play a role in osteogenesis of dental tissue-derived mesenchymal stem cells. This chain is Dynein axonemal intermediate chain 3 (Dnai3), found in Mus musculus (Mouse).